The following is a 195-amino-acid chain: Sec-independent protein translocase protein TatB (195 aa).

Residues 1–21 (MFDIGFSELVLIFIVGLVVLG) form a helical membrane-spanning segment. Residues 166 to 195 (DESQFAAYYPPDDDLASPTPSQPQDKQNVS) form a disordered region. Residues 183 to 195 (PTPSQPQDKQNVS) show a composition bias toward polar residues.

The protein belongs to the TatB family. In terms of assembly, the Tat system comprises two distinct complexes: a TatABC complex, containing multiple copies of TatA, TatB and TatC subunits, and a separate TatA complex, containing only TatA subunits. Substrates initially bind to the TatABC complex, which probably triggers association of the separate TatA complex to form the active translocon.

Its subcellular location is the cell inner membrane. Its function is as follows. Part of the twin-arginine translocation (Tat) system that transports large folded proteins containing a characteristic twin-arginine motif in their signal peptide across membranes. Together with TatC, TatB is part of a receptor directly interacting with Tat signal peptides. TatB may form an oligomeric binding site that transiently accommodates folded Tat precursor proteins before their translocation. The polypeptide is Sec-independent protein translocase protein TatB (Actinobacillus pleuropneumoniae serotype 5b (strain L20)).